The chain runs to 288 residues: MTIQWFPGHMAKARRQVTEKLKLIDIVYELVDARIPQSSRNPMIDEIIVNKPRIVLLNKVDKADPRVTQQWLDYYKEQGIYALAIDAQAGKGMKQIVSSSKELLQEKFDRMRAKGVKKPRAIRAMIVGIPNVGKSTLINRLASKKIAKTGDRPGVTQAQQWIKVGNELELLDTPGILWPKFEDETVGYKLATTGAIKDTILNMQDVAVYALRFLTSHYPEQLKQRYNLNEIPEDIVELFDAIGSRRGCLMGGGMVDYDKTAELVLREIRTDKIGTFTFDDPSEAEQPL.

A CP-type G domain is found at 14–179 (RRQVTEKLKL…LLDTPGILWP (166 aa)). GTP-binding positions include 58–61 (NKVD), 131–136 (NVGKST), and G175.

This sequence belongs to the TRAFAC class YlqF/YawG GTPase family. MTG1 subfamily. In terms of assembly, interacts with ctc. Interacts with the immature 50S ribosome subunit. 2 molecules of rbgA bind to one 50S subunit.

Its subcellular location is the cytoplasm. In terms of biological role, essential protein that is required for a late step of 50S ribosomal subunit assembly. Has GTPase activity that is stimulated by interaction with the immature 50S ribosome subunit. Binds to the 23S rRNA. Required for the association of ribosomal proteins rplP and rpmA with the large subunit. This chain is Ribosome biogenesis GTPase A, found in Priestia megaterium (strain DSM 319 / IMG 1521) (Bacillus megaterium).